The primary structure comprises 219 residues: 3-dehydroquinate dehydratase (219 aa).

Residues 34-36 (ELR) and Arg63 contribute to the 3-dehydroquinate site. Residue His114 is the Proton donor/acceptor of the active site. Residue Lys139 is the Schiff-base intermediate with substrate of the active site. Residues Arg174, Thr193, and Gln197 each coordinate 3-dehydroquinate.

The protein belongs to the type-I 3-dehydroquinase family. In terms of assembly, homodimer.

It catalyses the reaction 3-dehydroquinate = 3-dehydroshikimate + H2O. The protein operates within metabolic intermediate biosynthesis; chorismate biosynthesis; chorismate from D-erythrose 4-phosphate and phosphoenolpyruvate: step 3/7. Functionally, involved in the third step of the chorismate pathway, which leads to the biosynthesis of aromatic amino acids. Catalyzes the cis-dehydration of 3-dehydroquinate (DHQ) and introduces the first double bond of the aromatic ring to yield 3-dehydroshikimate. This chain is 3-dehydroquinate dehydratase, found in Sulfolobus acidocaldarius (strain ATCC 33909 / DSM 639 / JCM 8929 / NBRC 15157 / NCIMB 11770).